The following is a 203-amino-acid chain: Protein GrpE (203 aa).

A disordered region spans residues 1 to 38 (MTQDQTAEQMPAAESADQSADQGPAAESAAPPAVDSER).

Belongs to the GrpE family. In terms of assembly, homodimer.

It is found in the cytoplasm. Its function is as follows. Participates actively in the response to hyperosmotic and heat shock by preventing the aggregation of stress-denatured proteins, in association with DnaK and GrpE. It is the nucleotide exchange factor for DnaK and may function as a thermosensor. Unfolded proteins bind initially to DnaJ; upon interaction with the DnaJ-bound protein, DnaK hydrolyzes its bound ATP, resulting in the formation of a stable complex. GrpE releases ADP from DnaK; ATP binding to DnaK triggers the release of the substrate protein, thus completing the reaction cycle. Several rounds of ATP-dependent interactions between DnaJ, DnaK and GrpE are required for fully efficient folding. This chain is Protein GrpE, found in Paramagnetospirillum magneticum (strain ATCC 700264 / AMB-1) (Magnetospirillum magneticum).